The following is a 158-amino-acid chain: Fluoride-specific ion channel FluC 2 (158 aa).

The next 4 membrane-spanning stretches (helical) occupy residues 25–45 (AWHG…IGGT), 63–83 (WTTF…MVVI), 95–115 (PFFG…AVDI), and 126–146 (TALA…RLAA). Na(+)-binding residues include Gly103 and Thr106.

The protein belongs to the fluoride channel Fluc/FEX (TC 1.A.43) family.

Its subcellular location is the cell membrane. The catalysed reaction is fluoride(in) = fluoride(out). With respect to regulation, na(+) is not transported, but it plays an essential structural role and its presence is essential for fluoride channel function. Its function is as follows. Fluoride-specific ion channel. Important for reducing fluoride concentration in the cell, thus reducing its toxicity. This Streptomyces avermitilis (strain ATCC 31267 / DSM 46492 / JCM 5070 / NBRC 14893 / NCIMB 12804 / NRRL 8165 / MA-4680) protein is Fluoride-specific ion channel FluC 2.